We begin with the raw amino-acid sequence, 478 residues long: tRNA-2-methylthio-N(6)-dimethylallyladenosine synthase (478 aa).

In terms of domain architecture, MTTase N-terminal spans 39 to 157 (KLVFTQTFGC…FPQLLTESIN (119 aa)). 6 residues coordinate [4Fe-4S] cluster: Cys-48, Cys-84, Cys-118, Cys-194, Cys-198, and Cys-201. Residues 180–410 (RKFELKAFVN…LEAVNRISAE (231 aa)) enclose the Radical SAM core domain. Residues 410–477 (EINDGYKDRI…TFSLNGILVN (68 aa)) enclose the TRAM domain.

The protein belongs to the methylthiotransferase family. MiaB subfamily. In terms of assembly, monomer. Requires [4Fe-4S] cluster as cofactor.

The protein localises to the cytoplasm. It carries out the reaction N(6)-dimethylallyladenosine(37) in tRNA + (sulfur carrier)-SH + AH2 + 2 S-adenosyl-L-methionine = 2-methylsulfanyl-N(6)-dimethylallyladenosine(37) in tRNA + (sulfur carrier)-H + 5'-deoxyadenosine + L-methionine + A + S-adenosyl-L-homocysteine + 2 H(+). Catalyzes the methylthiolation of N6-(dimethylallyl)adenosine (i(6)A), leading to the formation of 2-methylthio-N6-(dimethylallyl)adenosine (ms(2)i(6)A) at position 37 in tRNAs that read codons beginning with uridine. The sequence is that of tRNA-2-methylthio-N(6)-dimethylallyladenosine synthase from Clostridioides difficile (strain 630) (Peptoclostridium difficile).